Consider the following 482-residue polypeptide: MKFIIKLFPEITIKSQSVRLRFIKILTGNIRNVLKHYDETLAVVRHWDNIEVRAKDENQRLAIRDALTRIPGIHHILEVEDVPFTDMHDIFEKALAQYREQLEGKTFCVRVKRRGKHEFSSIEVERYVGGGLNQHIESARVKLTNPDVTVHLEVEDDRLLLIKGRYEGIGGFPIGTQEDVLSLISGGFDSGVSSYMLMRRGCRVHYCFFNLGGAAHEIGVRQVAHYLWNRFGSSHRVRFVAINFEPVVGEILEKVDDGQMGVVLKRMMVRAASKVAERYGVQALVTGEALGQVSSQTLTNLRLIDNVSDTLILRPLISYDKEHIINLARQIGTEDFARTMPEYCGVISKSPTVKAIKAKIEAEEENFDFSILDKVVEEANNVDIREIAQQTQQEVVEVETVSGFGPNDVILDIRSVDEQDDKPLKVEGVDVVSLPFYKLSTKFGDLDQSKTWLLWCERGVMSRLQALYLREQGFANVKVYRP.

The THUMP domain maps to 61–165; that stretch reads LAIRDALTRI…DDRLLLIKGR (105 aa). Residues 183–184, Lys265, Gly287, and Gln296 each bind ATP; that span reads LI. An intrachain disulfide couples Cys344 to Cys456. The region spanning 404-482 is the Rhodanese domain; it reads FGPNDVILDI…GFANVKVYRP (79 aa). Cys456 acts as the Cysteine persulfide intermediate in catalysis.

It belongs to the ThiI family.

The protein localises to the cytoplasm. The catalysed reaction is [ThiI sulfur-carrier protein]-S-sulfanyl-L-cysteine + a uridine in tRNA + 2 reduced [2Fe-2S]-[ferredoxin] + ATP + H(+) = [ThiI sulfur-carrier protein]-L-cysteine + a 4-thiouridine in tRNA + 2 oxidized [2Fe-2S]-[ferredoxin] + AMP + diphosphate. It carries out the reaction [ThiS sulfur-carrier protein]-C-terminal Gly-Gly-AMP + S-sulfanyl-L-cysteinyl-[cysteine desulfurase] + AH2 = [ThiS sulfur-carrier protein]-C-terminal-Gly-aminoethanethioate + L-cysteinyl-[cysteine desulfurase] + A + AMP + 2 H(+). It functions in the pathway cofactor biosynthesis; thiamine diphosphate biosynthesis. Its function is as follows. Catalyzes the ATP-dependent transfer of a sulfur to tRNA to produce 4-thiouridine in position 8 of tRNAs, which functions as a near-UV photosensor. Also catalyzes the transfer of sulfur to the sulfur carrier protein ThiS, forming ThiS-thiocarboxylate. This is a step in the synthesis of thiazole, in the thiamine biosynthesis pathway. The sulfur is donated as persulfide by IscS. The chain is tRNA sulfurtransferase from Salmonella heidelberg (strain SL476).